Consider the following 214-residue polypeptide: Adenylate kinase (214 aa).

10–15 (GAGKGT) contributes to the ATP binding site. The tract at residues 30 to 59 (STGDMLRAAIKAGTELGLEAKRVMDEGKLV) is NMP. AMP contacts are provided by residues T31, R36, 57–59 (KLV), 85–88 (GFPR), and Q92. Positions 122-159 (GRRVHPASGRVYHVVYNPPKVEGKDNETGDDLIVRDDD) are LID. ATP contacts are provided by residues R123 and 132–133 (VY). R156 and R167 together coordinate AMP. ATP is bound at residue R200.

It belongs to the adenylate kinase family. As to quaternary structure, monomer.

The protein resides in the cytoplasm. The enzyme catalyses AMP + ATP = 2 ADP. It participates in purine metabolism; AMP biosynthesis via salvage pathway; AMP from ADP: step 1/1. Catalyzes the reversible transfer of the terminal phosphate group between ATP and AMP. Plays an important role in cellular energy homeostasis and in adenine nucleotide metabolism. In Alteromonas mediterranea (strain DSM 17117 / CIP 110805 / LMG 28347 / Deep ecotype), this protein is Adenylate kinase.